We begin with the raw amino-acid sequence, 218 residues long: MLKKQTVWLLTMLSLVVVLSVYYIMSPESKNAVQMQSEKSASDSGEVATEKAPAKQDTKEKSGTETEKGKEDGTKGTKDSSADKETSAEASEKGTVVTETADDDLFTTYRLDLEDARSKEREELNAIVSSDDATAKEKSEAYDKMTALSEVEGTEKQLETLIKTQGYEDALVNAEGDKINITVKSDKHSKSKATAIIDLVAKEIKTMKDVAVTFEPSK.

Residues 7–26 (VWLLTMLSLVVVLSVYYIMS) form a helical membrane-spanning segment. Residues 33 to 43 (VQMQSEKSASD) show a composition bias toward polar residues. Positions 33-99 (VQMQSEKSAS…ASEKGTVVTE (67 aa)) are disordered. A compositionally biased stretch (basic and acidic residues) spans 48–92 (ATEKAPAKQDTKEKSGTETEKGKEDGTKGTKDSSADKETSAEASE).

As to quaternary structure, interacts with SpoIIQ.

The protein resides in the cell membrane. In terms of biological role, involved in forespore engulfment. Forms a channel with SpoIIIAH that is open on the forespore end and closed (or gated) on the mother cell end. This allows sigma-E-directed gene expression in the mother-cell compartment of the sporangium to trigger the activation of sigma-G forespore-specific gene expression by a pathway of intercellular signaling. The polypeptide is Stage III sporulation protein AH (spoIIIAH) (Bacillus subtilis (strain 168)).